Consider the following 121-residue polypeptide: uncharacterized protein (121 aa).

The next 3 helical transmembrane spans lie at 1–21 (MILW…IMPV), 55–75 (LKYI…FCSI), and 92–112 (LFFK…IHFL).

The protein localises to the membrane. This is an uncharacterized protein from Saccharomyces cerevisiae (strain ATCC 204508 / S288c) (Baker's yeast).